The chain runs to 459 residues: Serine--tRNA ligase (459 aa).

254-256 lines the L-serine pocket; the sequence is TAE. Residues 285 to 287 and V301 each bind ATP; that span reads RKE. E308 is a binding site for L-serine. 372–375 is an ATP binding site; it reads EMVS. T408 contributes to the L-serine binding site.

It belongs to the class-II aminoacyl-tRNA synthetase family. Type-1 seryl-tRNA synthetase subfamily. In terms of assembly, homodimer. The tRNA molecule binds across the dimer.

The protein localises to the cytoplasm. The enzyme catalyses tRNA(Ser) + L-serine + ATP = L-seryl-tRNA(Ser) + AMP + diphosphate + H(+). It carries out the reaction tRNA(Sec) + L-serine + ATP = L-seryl-tRNA(Sec) + AMP + diphosphate + H(+). Its pathway is aminoacyl-tRNA biosynthesis; selenocysteinyl-tRNA(Sec) biosynthesis; L-seryl-tRNA(Sec) from L-serine and tRNA(Sec): step 1/1. Functionally, catalyzes the attachment of serine to tRNA(Ser). Is also able to aminoacylate tRNA(Sec) with serine, to form the misacylated tRNA L-seryl-tRNA(Sec), which will be further converted into selenocysteinyl-tRNA(Sec). The sequence is that of Serine--tRNA ligase from Desulfurococcus amylolyticus (strain DSM 18924 / JCM 16383 / VKM B-2413 / 1221n) (Desulfurococcus kamchatkensis).